Here is a 465-residue protein sequence, read N- to C-terminus: Hexokinase-4 (465 aa).

The Hexokinase domain occupies 10–454; that stretch reads AAKKEKVEQI…SGRGAALVSA (445 aa). The hexokinase small subdomain stretch occupies residues 67 to 203; the sequence is EGSEVGDFLS…DFEMDVVAMV (137 aa). 78–83 lines the ATP pocket; it reads DLGGTN. Residues 151–152, 168–169, and 204–205 contribute to the substrate site; these read SF, TK, and ND. The tract at residues 204–443 is hexokinase large subdomain; that stretch reads NDTVATMISC…CEITFIESEE (240 aa). ATP is bound at residue T228. The substrate site is built by N231, E256, and E290. ATP-binding positions include 295–296, 332–336, and 411–415; these read GK, TRFVS, and SVYKL.

This sequence belongs to the hexokinase family. In terms of assembly, monomer. Interacts with MIDN; the interaction occurs preferentially at low glucose levels and results in inhibition of hexokinase activity. Interacts with GCKR; leading to sequestration in the nucleus.

The protein localises to the cytoplasm. The protein resides in the nucleus. Its subcellular location is the mitochondrion. It carries out the reaction a D-hexose + ATP = a D-hexose 6-phosphate + ADP + H(+). The enzyme catalyses D-fructose + ATP = D-fructose 6-phosphate + ADP + H(+). The catalysed reaction is D-glucose + ATP = D-glucose 6-phosphate + ADP + H(+). It catalyses the reaction D-mannose + ATP = D-mannose 6-phosphate + ADP + H(+). It participates in carbohydrate metabolism; hexose metabolism. It functions in the pathway carbohydrate degradation; glycolysis; D-glyceraldehyde 3-phosphate and glycerone phosphate from D-glucose: step 1/4. Subject to allosteric regulation. Low glucose and high fructose-6-phosphate triggers association with the inhibitor GCKR followed by sequestration in the nucleus. Catalyzes the phosphorylation of hexose, such as D-glucose, D-fructose and D-mannose, to hexose 6-phosphate (D-glucose 6-phosphate, D-fructose 6-phosphate and D-mannose 6-phosphate, respectively). Compared to other hexokinases, has a weak affinity for D-glucose, and is effective only when glucose is abundant. Mainly expressed in pancreatic beta cells and the liver and constitutes a rate-limiting step in glucose metabolism in these tissues. Since insulin secretion parallels glucose metabolism and the low glucose affinity of GCK ensures that it can change its enzymatic activity within the physiological range of glucose concentrations, GCK acts as a glucose sensor in the pancreatic beta cell. In pancreas, plays an important role in modulating insulin secretion. In liver, helps to facilitate the uptake and conversion of glucose by acting as an insulin-sensitive determinant of hepatic glucose usage. Required to provide D-glucose 6-phosphate for the synthesis of glycogen. Mediates the initial step of glycolysis by catalyzing phosphorylation of D-glucose to D-glucose 6-phosphate. This Homo sapiens (Human) protein is Hexokinase-4.